The following is a 376-amino-acid chain: Chaperone protein DnaJ (376 aa).

Residues 5-70 (DYYEVLGLSK…QKKANYDQFG (66 aa)) enclose the J domain. The CR-type zinc finger occupies 133-215 (GVEKEISITR…CHGKGTVRKN (83 aa)). Residues Cys146, Cys149, Cys163, Cys166, Cys189, Cys192, Cys203, and Cys206 each contribute to the Zn(2+) site. CXXCXGXG motif repeat units lie at residues 146–153 (CDTCAGSG), 163–170 (CDKCGGTG), 189–196 (CDKCGGSG), and 203–210 (CTTCHGKG).

The protein belongs to the DnaJ family. As to quaternary structure, homodimer. Zn(2+) is required as a cofactor.

Its subcellular location is the cytoplasm. In terms of biological role, participates actively in the response to hyperosmotic and heat shock by preventing the aggregation of stress-denatured proteins and by disaggregating proteins, also in an autonomous, DnaK-independent fashion. Unfolded proteins bind initially to DnaJ; upon interaction with the DnaJ-bound protein, DnaK hydrolyzes its bound ATP, resulting in the formation of a stable complex. GrpE releases ADP from DnaK; ATP binding to DnaK triggers the release of the substrate protein, thus completing the reaction cycle. Several rounds of ATP-dependent interactions between DnaJ, DnaK and GrpE are required for fully efficient folding. Also involved, together with DnaK and GrpE, in the DNA replication of plasmids through activation of initiation proteins. The polypeptide is Chaperone protein DnaJ (Clostridium novyi (strain NT)).